A 372-amino-acid polypeptide reads, in one-letter code: Alanine dehydrogenase 1 (372 aa).

Residue His-94 is part of the active site. Position 170-200 (170-200) interacts with NAD(+); that stretch reads TYVIFGGGVAATNAANVALGLNAKVIIIELN.

The protein belongs to the AlaDH/PNT family.

It carries out the reaction L-alanine + NAD(+) + H2O = pyruvate + NH4(+) + NADH + H(+). The protein operates within amino-acid degradation; L-alanine degradation via dehydrogenase pathway; NH(3) and pyruvate from L-alanine: step 1/1. Functionally, may play a role in cell wall synthesis as L-alanine is an important constituent of the peptidoglycan layer. This chain is Alanine dehydrogenase 1 (ald1), found in Staphylococcus aureus (strain MSSA476).